The chain runs to 142 residues: PDZ domain-containing protein 11 (142 aa).

The 83-residue stretch at 49–131 (TIVLKKPPGA…ILMKVRYFPY (83 aa)) folds into the PDZ domain.

It is found in the cytoplasm. This chain is PDZ domain-containing protein 11 (pdzd11), found in Danio rerio (Zebrafish).